A 268-amino-acid chain; its full sequence is MEDFLLSNGYQLGKTIGEGTYSKVKEAFSKKHQRKVAIKIIDKMGGPEEFIQRFLPRELQIVRTLDHKNIIQVYEMLESADGKIYLVMELAEGGDVFDCVLNGGPLPESRAKALFRQMVEAIRYCHGCGVAHRDLKCENALLQGFNLKLTDFGFAKVLPKSRRELSQTFCGSTAYAAPEVLQGIPHDSKKGDVWSMGVVLYVMLCASLPFDDTDIPKMLWQQQKGVSFPTHLGISTECQDLLKRLLEPDMILRPSIEEVSWHPWLAST.

The Protein kinase domain occupies 10-265 (YQLGKTIGEG…IEEVSWHPWL (256 aa)). ATP is bound by residues 16 to 24 (IGEGTYSKV) and Lys39. Asp134 functions as the Proton acceptor in the catalytic mechanism. Position 166 is a phosphoserine; by autocatalysis (Ser166). Thr168 is subject to Phosphothreonine; by PDPK1.

The protein belongs to the protein kinase superfamily. CAMK Ser/Thr protein kinase family. Mg(2+) is required as a cofactor. The cofactor is Mn(2+). In terms of processing, autophosphorylated at Ser-166. Phosphorylation at Thr-168 by PDPK1 activates the serine/threonine protein kinase activity. As to expression, developmentally expressed in testicular germ cells. In adult testis, expression was detected in round and condensing spermatids, but not in meiotic pachytene spermatocytes. Not expressed in brain, ovary, kidney, liver or early embryonic cells.

The protein localises to the cell projection. It localises to the cilium. The protein resides in the flagellum. It carries out the reaction L-seryl-[protein] + ATP = O-phospho-L-seryl-[protein] + ADP + H(+). The catalysed reaction is L-threonyl-[protein] + ATP = O-phospho-L-threonyl-[protein] + ADP + H(+). Its activity is regulated as follows. Activated by phosphorylation on Thr-168 by PDPK1. Its function is as follows. Serine/threonine protein kinase required for spermatid development and male fertility. The polypeptide is Testis-specific serine/threonine-protein kinase 3 (Mus musculus (Mouse)).